Consider the following 500-residue polypeptide: tRNA nucleotidyltransferase cca1 (500 aa).

Residues 122–139 are flexible loop; it reads DYTNSNSSNKLVFGTPLE. Positions 231–241 match the ERhxxExxxhh motif motif; that stretch reads ERIGVEVDKML.

The protein belongs to the tRNA nucleotidyltransferase/poly(A) polymerase family.

It catalyses the reaction a tRNA precursor + 2 CTP = a tRNA with a 3' CC end + 2 diphosphate. In terms of biological role, tRNA nucleotidyltransferase involved in the synthesis of the tRNA CCA terminus. In contrast to what is usually observed in eukaryotes for which one enzyme synthesizes the whole tRNA CCA terminus, in S.pombe, cca1 specifically adds two cytidine residues to a tRNA substrate lacking this sequence while cca2 specifically adds the terminal adenosine residue thereby completing the CCA sequence. The protein is tRNA nucleotidyltransferase cca1 of Schizosaccharomyces pombe (strain 972 / ATCC 24843) (Fission yeast).